Consider the following 477-residue polypeptide: Serine/threonine protein phosphatase 2A 55 kDa regulatory subunit B' delta isoform (477 aa).

The protein belongs to the phosphatase 2A regulatory subunit B56 family. In terms of assembly, PP2A consists of a common heteromeric enzyme, composed of a catalytic subunit (subunits C), a constant regulatory subunit (subunit A), and a variety of regulatory subunits such as subunits B (the R2/B/PR55/B55, R3/B''/PR72/PR130/PR59 and R5/B'/B56 families). Interacts with SRK2E/OST1. As to expression, expressed ubiquitously.

The protein resides in the cytoplasm. In terms of biological role, the B regulatory subunit may modulate substrate selectivity and catalytic activity, and may also direct the localization of the catalytic enzyme to a particular subcellular compartment. The polypeptide is Serine/threonine protein phosphatase 2A 55 kDa regulatory subunit B' delta isoform (B'DELTA) (Arabidopsis thaliana (Mouse-ear cress)).